We begin with the raw amino-acid sequence, 348 residues long: MRREILSRTLLLSSLFVAGGFLTACGGGGGGTGGGEQGKITNELQAKAALGNSLSAIRSSAGLTEDTQTGVGAASVGNKGGWLRDALKLYKSAAPQTGTLASQQQYTCDNGGTATIDYSYDSNTRTASATITFDNCGNTCSLNKYVIFNGTMRFSGKDINQNYILESGSISVDSGFSYTDQCENEGVYFEGNFSISVKGYIPNTGDIEDGNNNYKADLTLDGGPVKVTDGSKWERGSFDNLTFYINEYYPASADYEWKVNGGFRYQDSYCVTDPVYLSFNTTNIFKGYNTVECEYTGRLSVNNDLIVAESYDPDSKPSETENYLKILFNGNVVFDNLCTNFNPPDTCS.

This is an uncharacterized protein from Aquifex aeolicus (strain VF5).